The chain runs to 93 residues: Pyrimidine/purine nucleoside phosphorylase (93 aa).

Belongs to the nucleoside phosphorylase PpnP family.

It carries out the reaction a purine D-ribonucleoside + phosphate = a purine nucleobase + alpha-D-ribose 1-phosphate. The enzyme catalyses adenosine + phosphate = alpha-D-ribose 1-phosphate + adenine. It catalyses the reaction cytidine + phosphate = cytosine + alpha-D-ribose 1-phosphate. The catalysed reaction is guanosine + phosphate = alpha-D-ribose 1-phosphate + guanine. It carries out the reaction inosine + phosphate = alpha-D-ribose 1-phosphate + hypoxanthine. The enzyme catalyses thymidine + phosphate = 2-deoxy-alpha-D-ribose 1-phosphate + thymine. It catalyses the reaction uridine + phosphate = alpha-D-ribose 1-phosphate + uracil. The catalysed reaction is xanthosine + phosphate = alpha-D-ribose 1-phosphate + xanthine. Its function is as follows. Catalyzes the phosphorolysis of diverse nucleosides, yielding D-ribose 1-phosphate and the respective free bases. Can use uridine, adenosine, guanosine, cytidine, thymidine, inosine and xanthosine as substrates. Also catalyzes the reverse reactions. The polypeptide is Pyrimidine/purine nucleoside phosphorylase (Tolumonas auensis (strain DSM 9187 / NBRC 110442 / TA 4)).